The primary structure comprises 367 residues: Cystinosin (367 aa).

Positions 1–22 are cleaved as a signal peptide; it reads MIRRWLVIFILFPLQLIEKCES. The Lumenal segment spans residues 23–125; that stretch reads TVDFSVPPIV…LVIHSNIVSI (103 aa). Residues Asn-51, Asn-66, Asn-84, Asn-104, and Asn-107 are each glycosylated (N-linked (GlcNAc...) asparagine). The 67-residue stretch at 123–189 folds into the PQ-loop 1 domain; it reads VSIINQVIGW…LFWVPSIKEQ (67 aa). Residues 126–150 form a helical membrane-spanning segment; that stretch reads INQVIGWIYFVAWSVSFYPQVITNW. Topologically, residues 151-159 are cytoplasmic; sequence RRKSVVGLS. A helical transmembrane segment spans residues 160-179; it reads FDFVVLNLMGFVAYSVFNIG. L-cystine is bound at residue Asn-166. The Lumenal segment spans residues 180 to 202; that stretch reads LFWVPSIKEQFLLKYPNGVNPVD. The chain crosses the membrane as a helical span at residues 203-225; that stretch reads SNDVFFSLHAVALTLVVIVQCLL. Asp-205 contributes to the H(+) binding site. Topologically, residues 226–234 are cytoplasmic; it reads YERGSQRVS. Residues 235-257 form a helical membrane-spanning segment; sequence WLAISFLVLSWLFTLIALIMAAV. The Lumenal portion of the chain corresponds to 258 to 263; sequence GATTWL. The PQ-loop 2 domain maps to 263 to 328; it reads LQFLFCFSYI…QSYNNDQWTL (66 aa). Residues 264–289 traverse the membrane as a helical segment; it reads QFLFCFSYIKLAVTLVKYFPQAYMNF. L-cystine is bound by residues Lys-273, Lys-280, and Tyr-281. At 290 to 298 the chain is on the cytoplasmic side; sequence HYKSTEGWS. A helical transmembrane segment spans residues 299 to 308; it reads IGNVLLDFTG. 2 residues coordinate L-cystine: Asn-301 and Asp-305. Asp-305 serves as a coordination point for H(+). Residues 309 to 331 lie on the Lumenal side of the membrane; sequence GSFSLLQMFLQSYNNDQWTLIFG. The chain crosses the membrane as a helical span at residues 332–354; it reads DPTKFGLGIFSIIFDVVFFIQHF. Position 346 (Asp-346) interacts with H(+). Residues 355–367 lie on the Cytoplasmic side of the membrane; sequence CLYRKKPGYDQLN. The Lysosomal targeting motif motif lies at 362-366; sequence GYDQL.

This sequence belongs to the cystinosin family. Interacts with components of the V-ATPase complex. Interacts with components of the Ragulator complex. Interacts with RRAGA/RagA and RRAGC/RagC. Interacts with AP-3 complex subunit mu (AP3M1 or AP3M2).

Its subcellular location is the lysosome membrane. The protein localises to the melanosome membrane. It carries out the reaction L-cystine(out) + H(+)(out) = L-cystine(in) + H(+)(in). With respect to regulation, switches between a lumen- and a cytosol-open conformation: pH induces conformational changes and shifts the equilibrium to facilitate the transition between the lumen- and cytosol-open conformation, thereby promoting cystine transport. Protonation of specific aspartate residues (Asp-205, Asp-305 and Asp-346) favors the cytosol-open conformation. Functionally, cystine/H(+) symporter that mediates export of cystine, the oxidized dimer of cysteine, from lysosomes. Plays an important role in melanin synthesis by catalyzing cystine export from melanosomes, possibly by inhibiting pheomelanin synthesis. In addition to cystine export, also acts as a positive regulator of mTORC1 signaling in kidney proximal tubular cells, via interactions with components of the v-ATPase and Ragulator complexes. Also involved in small GTPase-regulated vesicle trafficking and lysosomal localization of LAMP2A, independently of cystine transporter activity. The sequence is that of Cystinosin from Bos taurus (Bovine).